The following is a 429-amino-acid chain: Enolase (429 aa).

Q163 serves as a coordination point for (2R)-2-phosphoglycerate. E205 functions as the Proton donor in the catalytic mechanism. Mg(2+) contacts are provided by D242, E287, and D314. 4 residues coordinate (2R)-2-phosphoglycerate: K339, R368, S369, and K390. K339 functions as the Proton acceptor in the catalytic mechanism.

This sequence belongs to the enolase family. The cofactor is Mg(2+).

It localises to the cytoplasm. It is found in the secreted. The protein resides in the cell surface. The enzyme catalyses (2R)-2-phosphoglycerate = phosphoenolpyruvate + H2O. Its pathway is carbohydrate degradation; glycolysis; pyruvate from D-glyceraldehyde 3-phosphate: step 4/5. In terms of biological role, catalyzes the reversible conversion of 2-phosphoglycerate (2-PG) into phosphoenolpyruvate (PEP). It is essential for the degradation of carbohydrates via glycolysis. This Anaeromyxobacter sp. (strain Fw109-5) protein is Enolase.